The primary structure comprises 408 residues: CinA-like protein (408 aa).

It belongs to the CinA family.

This Anaeromyxobacter sp. (strain K) protein is CinA-like protein.